The following is a 909-amino-acid chain: Zinc finger and BTB domain-containing protein 41 (909 aa).

Residues 88 to 152 (CDLLIIVEGK…LYTSEFFVYK (65 aa)) form the BTB domain. Residues 207–230 (HQCKFCSRHFCYKKSLENHLAKTH) form a C2H2-type 1 zinc finger. The segment at 252–344 (RSKRNRKCPV…PEAGDSVGNV (93 aa)) is disordered. Residues 266–275 (TSDDEQESGD) show a composition bias toward acidic residues. Residues 284 to 295 (NFDKEKSDRNDS) are compositionally biased toward basic and acidic residues. Acidic residues predominate over residues 296-322 (EDPGSEYNAEEDELEEEMSDEYSDIEE). 13 consecutive C2H2-type zinc fingers follow at residues 361–383 (LQCPKCDKTFDRIGKYESHTRVH), 389–411 (FECDICHQRYSTKSNLTVHRKKH), 422–445 (HKCPYCNKLHASKKTLAKHVKRFH), 463–485 (WKCDICKKSFTRRPHLEEHMILH), 491–514 (FKCTYCEEHFKSRFARLKHQEKFH), 518–541 (FPCDICGRQFNDTGNLKRHIECTH), 547–569 (WTCFICGKSVRERTTLKEHLRIH), 575–597 (HLCSICGQSFRHGSSYRLHLRVH), 603–625 (YECDECGKTFIRHDHLTKHKKIH), 631–654 (HQCEECGKCFGRRDHLTVHYKSVH), 668–690 (HQCDVCKKIFKGKSSLEMHFRTH), 696–718 (YKCQICNQSFRIKKTLTKHLVIH), and 724–747 (FNCQHCNATFKRKDKLKYHIDHVH).

It is found in the nucleus. In terms of biological role, may be involved in transcriptional regulation. This chain is Zinc finger and BTB domain-containing protein 41 (ZBTB41), found in Homo sapiens (Human).